The sequence spans 164 residues: 3-isopropylmalate dehydratase small subunit 2 (164 aa).

The protein belongs to the LeuD family. LeuD type 2 subfamily. As to quaternary structure, heterodimer of LeuC and LeuD.

It catalyses the reaction (2R,3S)-3-isopropylmalate = (2S)-2-isopropylmalate. It functions in the pathway amino-acid biosynthesis; L-leucine biosynthesis; L-leucine from 3-methyl-2-oxobutanoate: step 2/4. In terms of biological role, catalyzes the isomerization between 2-isopropylmalate and 3-isopropylmalate, via the formation of 2-isopropylmaleate. The polypeptide is 3-isopropylmalate dehydratase small subunit 2 (leuD2) (Pyrococcus furiosus (strain ATCC 43587 / DSM 3638 / JCM 8422 / Vc1)).